Here is a 340-residue protein sequence, read N- to C-terminus: Phenylalanine--tRNA ligase alpha subunit (340 aa).

Glutamate 258 contributes to the Mg(2+) binding site.

It belongs to the class-II aminoacyl-tRNA synthetase family. Phe-tRNA synthetase alpha subunit type 1 subfamily. Tetramer of two alpha and two beta subunits. Mg(2+) is required as a cofactor.

It is found in the cytoplasm. It carries out the reaction tRNA(Phe) + L-phenylalanine + ATP = L-phenylalanyl-tRNA(Phe) + AMP + diphosphate + H(+). The chain is Phenylalanine--tRNA ligase alpha subunit from Corynebacterium efficiens (strain DSM 44549 / YS-314 / AJ 12310 / JCM 11189 / NBRC 100395).